A 660-amino-acid chain; its full sequence is ATPase-like fidgetin (660 aa).

Disordered regions lie at residues 141–186 and 209–334; these read KQIY…EDPF and ALSS…ADSK. Low complexity predominate over residues 145–161; sequence SKHSPPSTSTSSIVSSS. S177 bears the Phosphoserine mark. Residues 213-239 show a composition bias toward polar residues; that stretch reads DTGRSATMNSTTFPTAMKSQSTTKPTL. Low complexity predominate over residues 240-255; sequence SNSVSSPSIQVSNNQN. Polar residues predominate over residues 301 to 313; sequence LNSSHDTLGSSTR. The segment covering 314-333 has biased composition (low complexity); it reads PSSADTAGSPATSPPATADS. An ATP-binding site is contributed by 419–426; the sequence is GPPGTGKT.

This sequence belongs to the AAA ATPase family.

Its subcellular location is the nucleus. The polypeptide is ATPase-like fidgetin (alf1) (Schizosaccharomyces pombe (strain 972 / ATCC 24843) (Fission yeast)).